We begin with the raw amino-acid sequence, 208 residues long: Large ribosomal subunit protein uL3 (208 aa).

Residues 122 to 148 (KRHGQSRGPMAHGSRYHRRPGSMGPVA) form a disordered region.

Belongs to the universal ribosomal protein uL3 family. Part of the 50S ribosomal subunit. Forms a cluster with proteins L14 and L19.

In terms of biological role, one of the primary rRNA binding proteins, it binds directly near the 3'-end of the 23S rRNA, where it nucleates assembly of the 50S subunit. This chain is Large ribosomal subunit protein uL3, found in Streptococcus pyogenes serotype M1.